The sequence spans 56 residues: Large ribosomal subunit protein bL33 (56 aa).

The protein belongs to the bacterial ribosomal protein bL33 family.

This chain is Large ribosomal subunit protein bL33, found in Treponema denticola (strain ATCC 35405 / DSM 14222 / CIP 103919 / JCM 8153 / KCTC 15104).